The following is a 141-amino-acid chain: Auxin-responsive protein SAUR61 (141 aa).

The protein belongs to the ARG7 family.

Its subcellular location is the cell membrane. In terms of biological role, may promote auxin-stimulated organ elongation, such as hypocotyls, stamen filaments and petals. The chain is Auxin-responsive protein SAUR61 from Arabidopsis thaliana (Mouse-ear cress).